The primary structure comprises 323 residues: NADH-ubiquinone oxidoreductase chain 1 (323 aa).

The next 8 helical transmembrane spans lie at 9 to 29, 76 to 96, 107 to 127, 145 to 165, 175 to 195, 227 to 247, 258 to 278, and 298 to 318; these read ILNP…LTLI, LFVL…PMPM, ILFV…SGWA, ISYE…SGGF, EATW…ISTL, LFFL…AVLF, EFTS…FLWV, and FLPL…ACAG.

This sequence belongs to the complex I subunit 1 family.

It localises to the mitochondrion inner membrane. It catalyses the reaction a ubiquinone + NADH + 5 H(+)(in) = a ubiquinol + NAD(+) + 4 H(+)(out). Its function is as follows. Core subunit of the mitochondrial membrane respiratory chain NADH dehydrogenase (Complex I) that is believed to belong to the minimal assembly required for catalysis. Complex I functions in the transfer of electrons from NADH to the respiratory chain. The immediate electron acceptor for the enzyme is believed to be ubiquinone. The chain is NADH-ubiquinone oxidoreductase chain 1 (MT-ND1) from Gadus morhua (Atlantic cod).